The primary structure comprises 73 residues: Antimicrobial peptide lumbricin-PG (73 aa).

A signal peptide spans 1–14 (MLLTISDFLFLSLT). The tract at residues 25 to 48 (RPWSDRKNNYSGPQFTYPPEKAPP) is disordered.

The protein localises to the secreted. Displays antimicrobial activity against the Gram-positive bacterium S.aureus ATCC 2592, the Gram-negative bacteria E.coli ATCC 25922 and P.aeruginosa ATCC 27853, and the fungus C.albicans ATCC 2002. Displays stronger activity against P.aeruginosa and S.aureus than E.coli. Displays very weak hemolytic activity. In Metaphire guillelmi (Earthworm), this protein is Antimicrobial peptide lumbricin-PG.